Consider the following 274-residue polypeptide: 4-diphosphocytidyl-2-C-methyl-D-erythritol kinase (274 aa).

Lysine 8 is an active-site residue. An ATP-binding site is contributed by 92–102 (PSGAGLGGGSS). The active site involves aspartate 134.

The protein belongs to the GHMP kinase family. IspE subfamily.

The enzyme catalyses 4-CDP-2-C-methyl-D-erythritol + ATP = 4-CDP-2-C-methyl-D-erythritol 2-phosphate + ADP + H(+). The protein operates within isoprenoid biosynthesis; isopentenyl diphosphate biosynthesis via DXP pathway; isopentenyl diphosphate from 1-deoxy-D-xylulose 5-phosphate: step 3/6. Its function is as follows. Catalyzes the phosphorylation of the position 2 hydroxy group of 4-diphosphocytidyl-2C-methyl-D-erythritol. The sequence is that of 4-diphosphocytidyl-2-C-methyl-D-erythritol kinase from Porphyromonas gingivalis (strain ATCC 33277 / DSM 20709 / CIP 103683 / JCM 12257 / NCTC 11834 / 2561).